The sequence spans 485 residues: Cysteine--tRNA ligase (485 aa).

Cysteine 27 contacts Zn(2+). The short motif at 29 to 39 (ITAYDLCHIGH) is the 'HIGH' region element. Residues cysteine 208, histidine 233, and glutamate 237 each coordinate Zn(2+). A 'KMSKS' region motif is present at residues 265–269 (KMSKS). Lysine 268 is a binding site for ATP.

This sequence belongs to the class-I aminoacyl-tRNA synthetase family. In terms of assembly, monomer. Requires Zn(2+) as cofactor.

It is found in the cytoplasm. The enzyme catalyses tRNA(Cys) + L-cysteine + ATP = L-cysteinyl-tRNA(Cys) + AMP + diphosphate. This chain is Cysteine--tRNA ligase, found in Nitratidesulfovibrio vulgaris (strain DP4) (Desulfovibrio vulgaris).